A 248-amino-acid polypeptide reads, in one-letter code: Tropomyosin alpha-4 chain (248 aa).

Ala2 is modified (N-acetylalanine). The stretch at 2 to 248 (AGLNSLEAVK…DQTLNELNCI (247 aa)) forms a coiled coil. The residue at position 6 (Ser6) is a Phosphoserine. Residues 15 to 47 (QALQQQADEAEDRAQGLQRELDGERERREKAEG) form a disordered region. The segment covering 33–47 (RELDGERERREKAEG) has biased composition (basic and acidic residues). Residues Lys177 and Lys215 each carry the N6-acetyllysine modification. Phosphothreonine is present on Thr216.

It belongs to the tropomyosin family. In terms of assembly, homodimer. Heterodimer of an alpha (TPM1, TPM3 or TPM4) and a beta (TPM2) chain. Detected in cardiac tissue and platelets, the form found in cardiac tissue is a higher molecular weight than the form found in platelets. Expressed at higher levels in the platelets of hypertensive patients with cardiac hypertrophy than in the platelets of hypertensive patients without cardiac hypertrophy (at protein level).

The protein localises to the cytoplasm. It localises to the cytoskeleton. Binds to actin filaments in muscle and non-muscle cells. Plays a central role, in association with the troponin complex, in the calcium dependent regulation of vertebrate striated muscle contraction. Smooth muscle contraction is regulated by interaction with caldesmon. In non-muscle cells is implicated in stabilizing cytoskeleton actin filaments. Binds calcium. Plays a role in platelet biogenesis. This Homo sapiens (Human) protein is Tropomyosin alpha-4 chain (TPM4).